The primary structure comprises 512 residues: Cytochrome P450 76C2 (512 aa).

The chain crosses the membrane as a helical span at residues 3–23; that stretch reads IIFEQALFPLFCFVLSFFIIF. Cys-451 contacts heme.

This sequence belongs to the cytochrome P450 family. The cofactor is heme.

It localises to the membrane. The protein is Cytochrome P450 76C2 (CYP76C2) of Arabidopsis thaliana (Mouse-ear cress).